A 564-amino-acid chain; its full sequence is Malignant brain tumor repeat protein 1 (564 aa).

MBT repeat units lie at residues 64–176, 205–327, 331–442, and 450–549; these read FTWS…MKWL, RPTE…TKAT, LEHS…LDRL, and FKWE…LRHP.

In terms of assembly, interacts with histone H3 that is trimethylated at 'Lys-9' (H3K9me3).

This Caenorhabditis elegans protein is Malignant brain tumor repeat protein 1 (mbtr-1).